The primary structure comprises 329 residues: Ribosomal RNA small subunit methyltransferase H (329 aa).

S-adenosyl-L-methionine-binding positions include 44 to 46 (GGY), Asp62, Asp110, and Gln117. A disordered region spans residues 297-329 (APAELAANPRARSARLRSAERTSAPARRLGDAA).

It belongs to the methyltransferase superfamily. RsmH family.

It is found in the cytoplasm. It carries out the reaction cytidine(1402) in 16S rRNA + S-adenosyl-L-methionine = N(4)-methylcytidine(1402) in 16S rRNA + S-adenosyl-L-homocysteine + H(+). Functionally, specifically methylates the N4 position of cytidine in position 1402 (C1402) of 16S rRNA. In Rhodospirillum centenum (strain ATCC 51521 / SW), this protein is Ribosomal RNA small subunit methyltransferase H.